The primary structure comprises 318 residues: MTRRCSHCSHNGHNSRTCPNRGVKIFGVRLTDGSIRKSASMGNLSLLSSAAGSTSGGASPADGPDAAPTAADGYASDDFVQGSSSATRDRKKGVPWTEEEHRRFLLGLQKLGKGDWRGISRNFVVSRTPTQVASHAQKYFIRQSNMTRRKRRSSLFDMVPDESMDLPPLPGGQEPETQVLNQPALPPPREEEEVDSMESDTSAVAESSSASAIMPDNLQSTYPVIVPAYFSPFLQFSVPFWQNQKDEDGPVQETHEIVKPVPVHSKSPINVDELVGMSKLSIGESNQETVSTSLSLNLVGGQNRQSAFHANPPTRAQA.

Disordered stretches follow at residues 1–20 and 50–98; these read MTRR…TCPN and AAGS…PWTE. A CCHC-type zinc finger spans residues 3 to 20; the sequence is RRCSHCSHNGHNSRTCPN. Residues 8-18 are compositionally biased toward polar residues; it reads CSHNGHNSRTC. Low complexity predominate over residues 50–77; the sequence is AAGSTSGGASPADGPDAAPTAADGYASD. Residues 88–144 enclose the HTH myb-type domain; that stretch reads RDRKKGVPWTEEEHRRFLLGLQKLGKGDWRGISRNFVVSRTPTQVASHAQKYFIRQS. The segment at residues 116 to 140 is a DNA-binding region (H-T-H motif); sequence WRGISRNFVVSRTPTQVASHAQKYF. A disordered region spans residues 159–200; sequence VPDESMDLPPLPGGQEPETQVLNQPALPPPREEEEVDSMESD.

In terms of tissue distribution, expressed in all tissues, with the highest level in senescent leaves.

The protein localises to the nucleus. In terms of biological role, transcription repressor that binds to 5'-TATCCA-3' elements in gene promoters. Contributes to the sugar-repressed transcription of promoters containing SRS or 5'-TATCCA-3' elements. Transcription repressor involved in a cold stress response pathway that confers cold tolerance. Suppresses the DREB1-dependent signaling pathway under prolonged cold stress. DREB1 responds quickly and transiently while MYBS3 responds slowly to cold stress. They may act sequentially and complementarily for adaptation to short- and long-term cold stress. The protein is Transcription factor MYBS3 of Oryza sativa subsp. japonica (Rice).